The sequence spans 315 residues: 10-epi-cubebol synthase (315 aa).

Residues D79, N220, S224, and E228 each coordinate Mg(2+). A DDXXD motif motif is present at residues D79–E83. The NXXXSXXXE motif signature appears at N220 to E228.

Belongs to the terpene synthase family. It depends on Mg(2+) as a cofactor.

The enzyme catalyses (2E,6E)-farnesyl diphosphate + H2O = 10-epi-cubebol + diphosphate. In terms of biological role, catalyzes the cyclization of farnesyl diphosphate (FPP) to 10-epi-cubebol. Is also responsible for the formation of many other sesquiterpenes, mainly cadalanes and cubebanes, including 1,10-di-epi-cubebol and the cadalanes delta-cadinene, T-cadinol and alpha-cadinol. This Sorangium cellulosum (strain So ce56) (Polyangium cellulosum (strain So ce56)) protein is 10-epi-cubebol synthase.